The primary structure comprises 437 residues: MTSWQRLCWHYRLWTLGCYMLLAILALKLSLRLKCDFDAMDLDSEEFQSQYCRDLLYKTLKLPAKSSINCSGVIRGEQKAVTQALLNNLEIKKKQQLFTEADYLRMTADCEHFKTKRKFIQVPLSKEEASFPIAYSMVVHEKIENFERLLRAVYTPQNVYCVHMDQKSSEPFKQAVRAIVSCFPNVFIASKLVSVVYASWSRVQADLNCMEDLLQSPVPWKYLLNTCGTDFPIKTNAEMVKALKLLKGQNSMESEVPPPHKKSRWKYHYEVTDTLHMTSKRKTPPPNNLTMFTGNAYMVASRDFIEHVFSNSKARQLIEWVKDTYSPDEHLWATLQRASWMPGSDPLHRKFDLSDMRAIARLTKWYDHEGDIENGAPYTSCSGIHQRAVCVYGSGDLHWILQNHHLLANKFDPKVDDNVLQCLEEYLRHKAIYGTEL.

The Cytoplasmic segment spans residues 1–12 (MTSWQRLCWHYR). A helical; Signal-anchor for type II membrane protein membrane pass occupies residues 13–30 (LWTLGCYMLLAILALKLS). The Lumenal portion of the chain corresponds to 31-437 (LRLKCDFDAM…RHKAIYGTEL (407 aa)). 4 disulfide bridges follow: cysteine 70/cysteine 227, cysteine 161/cysteine 381, cysteine 182/cysteine 209, and cysteine 390/cysteine 422. N-linked (GlcNAc...) asparagine glycosylation occurs at asparagine 288.

It belongs to the glycosyltransferase 14 family. In terms of processing, N-glycosylated.

Its subcellular location is the golgi apparatus membrane. It carries out the reaction a 3-O-[beta-D-galactosyl-(1-&gt;3)-N-acetyl-alpha-D-galactosaminyl]-L-seryl-[protein] + UDP-N-acetyl-alpha-D-glucosamine = 3-O-{beta-D-galactosyl-(1-&gt;3)-[N-acetyl-beta-D-glucosaminyl-(1-&gt;6)]-N-acetyl-alpha-D-galactosaminyl}-L-seryl-[protein] + UDP + H(+). The enzyme catalyses a 3-O-[beta-D-galactosyl-(1-&gt;3)-N-acetyl-alpha-D-galactosaminyl]-L-threonyl-[protein] + UDP-N-acetyl-alpha-D-glucosamine = a 3-O-{beta-D-galactosyl-(1-&gt;3)-[N-acetyl-beta-D-glucosaminyl-(1-&gt;6)]-N-acetyl-alpha-D-galactosaminyl}-L-threonyl-[protein] + UDP + H(+). It catalyses the reaction a beta-D-Gal-(1-&gt;4)-beta-D-GlcNAc-(1-&gt;3)-beta-D-Gal-(1-&gt;4)-beta-D-GlcNAc derivative + UDP-N-acetyl-alpha-D-glucosamine = a beta-D-Gal-(1-&gt;4)-beta-D-GlcNAc-(1-&gt;3)-[beta-D-GlcNAc-(1-&gt;6)]-beta-D-Gal-(1-&gt;4)-N-acetyl-beta-D-glucosaminyl derivative + UDP + H(+). The catalysed reaction is 3-O-[N-acetyl-beta-D-glucosaminyl-(1-&gt;3)-N-acetyl-alpha-D-galactosaminyl]-L-seryl-[protein] + UDP-N-acetyl-alpha-D-glucosamine = 3-O-[N-acetyl-beta-D-glucosaminyl-(1-&gt;3)-[N-acetyl-beta-D-glucosaminyl-(1-&gt;6)]-N-acetyl-alpha-D-galactosaminyl]-L-seryl-[protein] + UDP + H(+). It carries out the reaction a 3-O-[N-acetyl-beta-D-glucosaminyl-(1-&gt;3)-N-acetyl-alpha-D-galactosaminyl]-L-threonyl-[protein] + UDP-N-acetyl-alpha-D-glucosamine = 3-O-[N-acetyl-beta-D-glucosaminyl-(1-&gt;3)-[N-acetyl-beta-D-glucosaminyl-(1-&gt;6)]-N-acetyl-alpha-D-galactosaminyl]-L-threonyl-[protein] + UDP + H(+). It functions in the pathway protein modification; protein glycosylation. Functionally, glycosyltransferase that can synthesize all known mucin beta 6 N-acetylglucosaminides. Mediates core 2 and core 4 O-glycan branching, 2 important steps in mucin-type biosynthesis. Also has I-branching enzyme activity by converting linear into branched poly-N-acetyllactosaminoglycans, leading to introduce the blood group I antigen during embryonic development. The chain is Beta-1,3-galactosyl-O-glycosyl-glycoprotein beta-1,6-N-acetylglucosaminyltransferase 3 (Gcnt3) from Mus musculus (Mouse).